The chain runs to 750 residues: uncharacterized protein (750 aa).

This is an uncharacterized protein from Escherichia coli O157:H7.